Reading from the N-terminus, the 288-residue chain is Syntaxin-1A (288 aa).

Positions 1–13 (MKDRTQELRTAKD) are enriched in basic and acidic residues. Residues 1-20 (MKDRTQELRTAKDSDDDDDV) form a disordered region. Topologically, residues 1–265 (MKDRTQELRT…KYQSKARRKK (265 aa)) are cytoplasmic. 3 positions are modified to phosphoserine: S14, S64, and S95. Residues 68-109 (DEKTKEELEELMSDIKKTANKVRSKLKSIEQSIEQEEGLNRS) are a coiled coil. S188 bears the Phosphoserine; by DAPK1 mark. Positions 192-254 (LSEIETRHSE…ERAVSDTKKA (63 aa)) constitute a t-SNARE coiled-coil homology domain. Glycyl lysine isopeptide (Lys-Gly) (interchain with G-Cter in SUMO) cross-links involve residues K252, K253, and K256. The chain crosses the membrane as a helical; Anchor for type IV membrane protein span at residues 266-286 (IMIIICCVILGIIIASTIGGI). Over 287 to 288 (FG) the chain is Extracellular.

This sequence belongs to the syntaxin family. In terms of assembly, part of the SNARE core complex containing SNAP25, VAMP2 and STX1A; this complex constitutes the basic catalytic machinery of the complex neurotransmitter release apparatus. The SNARE complex interacts with CPLX1. Interacts with STXBP1. The interaction with STXBP1 promotes assembly of the SNARE complex. Interacts (via C-terminus) with KCNB1 (via C-terminus); the interaction increases in a calcium-dependent manner and induces a pore-independent enhancement of exocytosis in neuroendocrine cells, chromaffin cells, pancreatic beta cells and from the soma of dorsal root ganglia (DRG) neurons. Interacts with SYTL4. Interacts with STXBP6. Interacts with PLCL1 (via C2 domain). Interacts with OTOF. Interacts with LGI3. Interacts (via the H3 domain) with SLC6A4 (via the N-terminus); this interaction regulates SLC4A6 channel conductance in thalamocortical neurons. Interacts with SYT6 and SYT8; the interaction is Ca(2+)-dependent. Interacts with VAMP8. Interacts with SNAP23. Interacts with VAPA and SYBU. Interacts with PRRT2. Interacts with SEPT8. Interacts with STXBP5L. Interacts with synaptotagmin-1/SYT1. Interacts with SEPTIN5; in the cerebellar cortex. Interacts with SEPTIN4; in the striatum. In terms of processing, phosphorylated by CK2. Phosphorylation at Ser-188 by DAPK1 significantly decreases its interaction with STXBP1. Phosphorylated by CK2. Phosphorylation at Ser-188 by DAPK1 significantly decreases its interaction with STXBP1. Post-translationally, sumoylated, sumoylation is required for regulation of synaptic vesicle endocytosis. In terms of tissue distribution, expressed in the striatum (at protein level). Expressed in the ileum.

It is found in the cytoplasmic vesicle. It localises to the secretory vesicle. The protein resides in the synaptic vesicle membrane. The protein localises to the synapse. Its subcellular location is the synaptosome. It is found in the cell membrane. Plays an essential role in hormone and neurotransmitter calcium-dependent exocytosis and endocytosis. Part of the SNARE (Soluble NSF Attachment Receptor) complex composed of SNAP25, STX1A and VAMP2 which mediates the fusion of synaptic vesicles with the presynaptic plasma membrane. STX1A and SNAP25 are localized on the plasma membrane while VAMP2 resides in synaptic vesicles. The pairing of the three SNAREs from the N-terminal SNARE motifs to the C-terminal anchors leads to the formation of the SNARE complex, which brings membranes into close proximity and results in final fusion. Participates in the calcium-dependent regulation of acrosomal exocytosis in sperm. Also plays an important role in the exocytosis of hormones such as insulin or glucagon-like peptide 1 (GLP-1). In Mus musculus (Mouse), this protein is Syntaxin-1A (Stx1a).